The sequence spans 852 residues: Bifunctional uridylyltransferase/uridylyl-removing enzyme (852 aa).

The tract at residues 1–318 (MPANLSSALE…SAPMRVTLRI (318 aa)) is uridylyltransferase. Residues 319 to 672 (DDDYIQVNNQ…SRILFKSDSF (354 aa)) form a uridylyl-removing region. The 123-residue stretch at 436–558 (VDDHILTVVR…VQTHERLSAL (123 aa)) folds into the HD domain. 2 ACT domains span residues 673 to 757 (QVMV…SHSR) and 785 to 852 (SVEI…EQLS).

The protein belongs to the GlnD family. Mg(2+) serves as cofactor.

The enzyme catalyses [protein-PII]-L-tyrosine + UTP = [protein-PII]-uridylyl-L-tyrosine + diphosphate. The catalysed reaction is [protein-PII]-uridylyl-L-tyrosine + H2O = [protein-PII]-L-tyrosine + UMP + H(+). With respect to regulation, uridylyltransferase (UTase) activity is inhibited by glutamine, while glutamine activates uridylyl-removing (UR) activity. In terms of biological role, modifies, by uridylylation and deuridylylation, the PII regulatory proteins (GlnB and homologs), in response to the nitrogen status of the cell that GlnD senses through the glutamine level. Under low glutamine levels, catalyzes the conversion of the PII proteins and UTP to PII-UMP and PPi, while under higher glutamine levels, GlnD hydrolyzes PII-UMP to PII and UMP (deuridylylation). Thus, controls uridylylation state and activity of the PII proteins, and plays an important role in the regulation of nitrogen assimilation and metabolism. The protein is Bifunctional uridylyltransferase/uridylyl-removing enzyme of Neisseria meningitidis serogroup A / serotype 4A (strain DSM 15465 / Z2491).